A 185-amino-acid chain; its full sequence is Peptide deformylase (185 aa).

C98 and H140 together coordinate Fe cation. The active site involves E141. H144 contributes to the Fe cation binding site.

It belongs to the polypeptide deformylase family. It depends on Fe(2+) as a cofactor.

The enzyme catalyses N-terminal N-formyl-L-methionyl-[peptide] + H2O = N-terminal L-methionyl-[peptide] + formate. Functionally, removes the formyl group from the N-terminal Met of newly synthesized proteins. Requires at least a dipeptide for an efficient rate of reaction. N-terminal L-methionine is a prerequisite for activity but the enzyme has broad specificity at other positions. The protein is Peptide deformylase of Parabacteroides distasonis (strain ATCC 8503 / DSM 20701 / CIP 104284 / JCM 5825 / NCTC 11152).